Reading from the N-terminus, the 395-residue chain is Chorismate synthase (395 aa).

This sequence belongs to the chorismate synthase family. Homotetramer. The cofactor is FMNH2.

It catalyses the reaction 5-O-(1-carboxyvinyl)-3-phosphoshikimate = chorismate + phosphate. It functions in the pathway metabolic intermediate biosynthesis; chorismate biosynthesis; chorismate from D-erythrose 4-phosphate and phosphoenolpyruvate: step 7/7. The chain is Chorismate synthase from Schizosaccharomyces pombe (strain 972 / ATCC 24843) (Fission yeast).